We begin with the raw amino-acid sequence, 434 residues long: Trigger factor (434 aa).

The 86-residue stretch at 161–246 (GKRVSIDFVG…VNKVEARELP (86 aa)) folds into the PPIase FKBP-type domain.

The protein belongs to the FKBP-type PPIase family. Tig subfamily.

The protein localises to the cytoplasm. The catalysed reaction is [protein]-peptidylproline (omega=180) = [protein]-peptidylproline (omega=0). Its function is as follows. Involved in protein export. Acts as a chaperone by maintaining the newly synthesized protein in an open conformation. Functions as a peptidyl-prolyl cis-trans isomerase. The protein is Trigger factor of Vibrio parahaemolyticus serotype O3:K6 (strain RIMD 2210633).